Consider the following 645-residue polypeptide: MTPPLIELKDVTRYYGSGDTEVRALDGVSLTIETGEFVAIVGQSGSGKSTLMNLLGCLDRPTNGRYAIRGQNVSELDPDNLAALRRETFGFIFQRYNLLASVSASENVEIPAVYAGLALSERREKAAGLLAKLGLGERVHHKPGQLSGGQQQRVAVARALVNDAEVILADEPTGALDSGSSNDLLNLLEELHASGRTIILITHDQKVAARAKRVIEIRDGKIISDSGNKQAAAEEAPQYRYARKGPSPIAQVAESVKMAFRSLRANLFRTALTLLGVVIGVSAVVAMLAIGEGSRAEVMARFESMGPNLLFVRPGAPGTRMRGGAIATLTLEDAQALGELENILAAVPSRSTNATLRNGGNDYSSSIEGVSETWPIAQNRDMLYGTFFTKDDVDRRIGAVVLGTTTAGNLFDDIESAVGQYVFLGGAPFEVAGILESKGASSWGQDQDDIALVPITTGMMRLFGQSYLSSITLAVDDTDRITETEAAAHAFLLARHGTEDFQIRNTASILASVEETQNSFSILLGSVAAISLLVGGIGVMNIMLVSVSERTREIGVRMATGARRSDIQTQFIVESLVVGGLGGIAGVAIGFGIVFIIAQMGMTVAVTPLPAILAFSSALGTGLVFGLLPARQASRLDPVAALASE.

The ABC transporter domain maps to 6-244 (IELKDVTRYY…EAPQYRYARK (239 aa)). 42-49 (GQSGSGKS) contacts ATP. 4 helical membrane-spanning segments follow: residues 271–291 (ALTL…LAIG), 520–540 (FSIL…IGVM), 577–597 (VVGG…VFII), and 608–628 (PLPA…FGLL).

Belongs to the ABC transporter superfamily. Macrolide exporter (TC 3.A.1.122) family. Homodimer.

The protein resides in the cell inner membrane. In terms of biological role, non-canonical ABC transporter that contains transmembrane domains (TMD), which form a pore in the inner membrane, and an ATP-binding domain (NBD), which is responsible for energy generation. Confers resistance against macrolides. The protein is Macrolide export ATP-binding/permease protein MacB of Hyphomonas neptunium (strain ATCC 15444).